A 700-amino-acid chain; its full sequence is Methionine--tRNA ligase (700 aa).

A 'HIGH' region motif is present at residues 14-24 (PYANGPVHLGH). Zn(2+) is bound by residues C146, C149, C159, and C162. Positions 344 to 348 (KFSKS) match the 'KMSKS' region motif. K347 lines the ATP pocket. One can recognise a tRNA-binding domain in the interval 599–700 (DFLKVDLRVA…GEEINGRQIQ (102 aa)).

It belongs to the class-I aminoacyl-tRNA synthetase family. MetG type 1 subfamily. Homodimer. Requires Zn(2+) as cofactor.

The protein resides in the cytoplasm. The enzyme catalyses tRNA(Met) + L-methionine + ATP = L-methionyl-tRNA(Met) + AMP + diphosphate. Is required not only for elongation of protein synthesis but also for the initiation of all mRNA translation through initiator tRNA(fMet) aminoacylation. The protein is Methionine--tRNA ligase of Pelodictyon phaeoclathratiforme (strain DSM 5477 / BU-1).